The sequence spans 223 residues: UPF0441 protein KPN78578_33850 (223 aa).

The segment at 165–223 (SYGAAQPGRTMNVPKTAMAPKPATTTTVTRGGFGESVAKQSTMQRSAAGSTSSSRSMGG) is disordered. Composition is skewed to low complexity over residues 177-193 (VPKT…TTVT) and 209-223 (RSAA…SMGG).

It belongs to the UPF0441 family.

The protein is UPF0441 protein KPN78578_33850 of Klebsiella pneumoniae subsp. pneumoniae (strain ATCC 700721 / MGH 78578).